The primary structure comprises 426 residues: Ankyrin repeat-containing protein BDA1 (426 aa).

6 ANK repeats span residues 1-29, 36-65, 70-99, 104-134, 138-167, and 182-212; these read MDSK…DILQ, IIHT…SFAK, YGLS…SLVR, GGMT…SIKD, NGET…KMRD, and GGNT…DRNI. A run of 4 helical transmembrane segments spans residues 288-308, 329-349, 355-375, and 380-400; these read ALLV…AQLL, WGCN…LLPV, WWYF…MYMM, and FFFL…VLYV.

Its subcellular location is the cell membrane. Its function is as follows. Involved in plant defense. Required for basal resistance against Pseudomonas syringae pv. tomato DC3000. Required for resistance against nonpathogenic bacteria. May be involved in signaling components that function downstream of SNC2 and upstream of NPR1 and WRKY70 to regulate defense responses. This is Ankyrin repeat-containing protein BDA1 from Arabidopsis thaliana (Mouse-ear cress).